We begin with the raw amino-acid sequence, 423 residues long: Large ribosomal subunit protein mL37 (423 aa).

The N-terminal 29 residues, 1–29 (MALASGPARRALAGSGQLGLGGFGAPRRG), are a transit peptide targeting the mitochondrion.

Belongs to the mitochondrion-specific ribosomal protein mL37 family. As to quaternary structure, component of the mitochondrial large ribosomal subunit (mt-LSU). Mature mammalian 55S mitochondrial ribosomes consist of a small (28S) and a large (39S) subunit. The 28S small subunit contains a 12S ribosomal RNA (12S mt-rRNA) and 30 different proteins. The 39S large subunit contains a 16S rRNA (16S mt-rRNA), a copy of mitochondrial valine transfer RNA (mt-tRNA(Val)), which plays an integral structural role, and 52 different proteins. mL37 forms a heterodimer with mL65.

Its subcellular location is the mitochondrion. In Homo sapiens (Human), this protein is Large ribosomal subunit protein mL37 (MRPL37).